We begin with the raw amino-acid sequence, 638 residues long: Threonine--tRNA ligase (638 aa).

A TGS domain is found at 1–61 (MPVITLPDGS…DADAQLQIIT (61 aa)). A catalytic region spans residues 243–534 (DHRKIGKALN…LTEEFAGFFP (292 aa)). Zn(2+)-binding residues include Cys334, His385, and His511.

The protein belongs to the class-II aminoacyl-tRNA synthetase family. Homodimer. Requires Zn(2+) as cofactor.

It is found in the cytoplasm. The enzyme catalyses tRNA(Thr) + L-threonine + ATP = L-threonyl-tRNA(Thr) + AMP + diphosphate + H(+). Functionally, catalyzes the attachment of threonine to tRNA(Thr) in a two-step reaction: L-threonine is first activated by ATP to form Thr-AMP and then transferred to the acceptor end of tRNA(Thr). Also edits incorrectly charged L-seryl-tRNA(Thr). The chain is Threonine--tRNA ligase from Alteromonas mediterranea (strain DSM 17117 / CIP 110805 / LMG 28347 / Deep ecotype).